The following is a 318-amino-acid chain: Thymidylate synthase (318 aa).

Residues Arg25 and 180 to 181 (RR) each bind dUMP. The active-site Nucleophile is Cys200. Residues 220–223 (RSGD), Asn231, and 261–263 (HIY) contribute to the dUMP site. Asp223 provides a ligand contact to (6R)-5,10-methylene-5,6,7,8-tetrahydrofolate. Ala317 is a (6R)-5,10-methylene-5,6,7,8-tetrahydrofolate binding site.

The protein belongs to the thymidylate synthase family. Bacterial-type ThyA subfamily. As to quaternary structure, homodimer.

Its subcellular location is the cytoplasm. It carries out the reaction dUMP + (6R)-5,10-methylene-5,6,7,8-tetrahydrofolate = 7,8-dihydrofolate + dTMP. The protein operates within pyrimidine metabolism; dTTP biosynthesis. Catalyzes the reductive methylation of 2'-deoxyuridine-5'-monophosphate (dUMP) to 2'-deoxythymidine-5'-monophosphate (dTMP) while utilizing 5,10-methylenetetrahydrofolate (mTHF) as the methyl donor and reductant in the reaction, yielding dihydrofolate (DHF) as a by-product. This enzymatic reaction provides an intracellular de novo source of dTMP, an essential precursor for DNA biosynthesis. This chain is Thymidylate synthase, found in Lactobacillus gasseri (strain ATCC 33323 / DSM 20243 / BCRC 14619 / CIP 102991 / JCM 1131 / KCTC 3163 / NCIMB 11718 / NCTC 13722 / AM63).